We begin with the raw amino-acid sequence, 448 residues long: Ribosomal protein uS12 methylthiotransferase RimO (448 aa).

The region spanning 7–123 (EKVSLVSLGC…IAEIIAEKKQ (117 aa)) is the MTTase N-terminal domain. The [4Fe-4S] cluster site is built by Cys16, Cys52, Cys86, Cys161, Cys165, and Cys168. The 231-residue stretch at 147–377 (SSPHYTAYLK…MRTQARVSFK (231 aa)) folds into the Radical SAM core domain. Residues 380–448 (RTLVDSEEDV…DYDLIGEIVD (69 aa)) enclose the TRAM domain.

The protein belongs to the methylthiotransferase family. RimO subfamily. Requires [4Fe-4S] cluster as cofactor.

The protein resides in the cytoplasm. The enzyme catalyses L-aspartate(89)-[ribosomal protein uS12]-hydrogen + (sulfur carrier)-SH + AH2 + 2 S-adenosyl-L-methionine = 3-methylsulfanyl-L-aspartate(89)-[ribosomal protein uS12]-hydrogen + (sulfur carrier)-H + 5'-deoxyadenosine + L-methionine + A + S-adenosyl-L-homocysteine + 2 H(+). Catalyzes the methylthiolation of an aspartic acid residue of ribosomal protein uS12. The chain is Ribosomal protein uS12 methylthiotransferase RimO from Citrifermentans bemidjiense (strain ATCC BAA-1014 / DSM 16622 / JCM 12645 / Bem) (Geobacter bemidjiensis).